The sequence spans 971 residues: Nuclear factor NF-kappa-B p105 subunit (971 aa).

The RHD domain maps to 40–365 (PYLQILEQPK…EVQRKRQKLM (326 aa)). Cys-59 is subject to S-nitrosocysteine; alternate. Cys-59 is lipidated: S-(15-deoxy-Delta12,14-prostaglandin J2-9-yl)cysteine; alternate. Lys-323 participates in a covalent cross-link: Glycyl lysine isopeptide (Lys-Gly) (interchain with G-Cter in SUMO2). Ser-335 is modified (phosphoserine; by PKA). Residues 358 to 363 (QRKRQK) carry the Nuclear localization signal motif. The segment at 370-392 (DSFGGGSGAGAGGGGMFGSGGGG) is GRR. The interaction with CFLAR stretch occupies residues 433–971 (INTKFKNGPK…GQEGPIEGKI (539 aa)). Lys-438 carries the N6-acetyllysine; by EP300 modification. The disordered stretch occupies residues 439–470 (NGPKDCAKSDDEESLTLPEKETEGEGPSLPMA). Residue Ser-447 is modified to Phosphoserine. 6 ANK repeats span residues 538–567 (NGDS…GLIS), 577–606 (LYQT…DLSL), 610–639 (WGNS…AAPL), 646–675 (EGLN…EVNA), 680–710 (SGRT…HVDS), and 714–743 (DGTT…DPLV). Residues 646–680 (EGLNAIHIAVMSNSLPCLLLLVAAGAEVNAQEQKS) form an essential for interaction with HIF1AN region. (3S)-3-hydroxyasparagine; by HIF1AN is present on Asn-674. Ser-755 is subject to Phosphoserine. An ANK 7 repeat occupies 767–797 (PGTTPLDMAANWQVFDILNGKPYEPVFTSDD). The Death domain occupies 801–888 (QGDMKQLTED…EAIEVIQAAF (88 aa)). A Phosphoserine modification is found at Ser-896. Ser-910 bears the Phosphoserine; by GSK3-beta; in vitro mark. Ser-926 carries the post-translational modification Phosphoserine. Ser-930 and Ser-935 each carry phosphoserine; by IKKB. Ser-940 is modified (phosphoserine). Thr-946 carries the post-translational modification Phosphothreonine.

In terms of assembly, component of the NF-kappa-B p65-p50 complex. Homodimer; component of the NF-kappa-B p50-p50 complex. Component of the NF-kappa-B p105-p50 complex. Component of the NF-kappa-B p50-c-Rel complex. Component of a complex consisting of the NF-kappa-B p50-p50 homodimer and BCL3. Also interacts with MAP3K8. NF-kappa-B p50 subunit interacts with NCOA3 coactivator, which may coactivate NF-kappa-B dependent expression via its histone acetyltransferase activity. Interacts with TSC22D3; this interaction prevents nuclear translocation and DNA-binding. Interacts with SPAG9 and UNC5CL. NFKB1/p105 interacts with CFLAR; the interaction inhibits p105 processing into p50. NFKB1/p105 forms a ternary complex with MAP3K8 and TNIP2. Interacts with GSK3B; the interaction prevents processing of p105 to p50. NFKB1/p50 interacts with NFKBIE. NFKB1/p50 interacts with NFKBIZ. Nuclear factor NF-kappa-B p50 subunit interacts with NFKBID. Directly interacts with MEN1. Interacts with HIF1AN. Interacts with FEM1AA; interaction is direct. Post-translationally, generation of the NF-kappa-B p50 (Nuclear factor NF-kappa-B p50 subunit) transcription factor takes place both cotranslationally and post-translationally via non-mutually exclusive mechanisms. A cotranslational processing allows the production of both p50 and p105 (Nuclear factor NF-kappa-B p105 subunit) from a single NFKB1 mRNA. While translation occurs, the particular unfolded structure after the GRR repeat region acts as a substrate for the proteasome, promoting degradation of the C-terminus. The GRR acts as a proteasomal 'stop signal', protecting the region upstream of the GRR from degradation and promoting generation of p50. It is unclear if limited proteasome degradation during cotranslational processing depends on ubiquitination. NF-kappa-B p50 is also generated post-translationally following ubiquitination by the KPC complex, leading to limited processing by the proteasome downstream of the GRR region, thereby generating p50. Phosphorylation at the C-terminus by IKBKB/IKKB acts as a signal for ubiquitination and promotes either complete degradation or processing to generate the NF-kappa-B p50 (Nuclear factor NF-kappa-B p50 subunit). Phosphorylation at Ser-910 primes p105 for proteolytic processing in response to TNF-alpha stimulation. Phosphorylation at Ser-926, Ser-930 and Ser-935 are required for BTRC/BTRCP-mediated ubiquitination and proteolysis. Phosphorylation at Ser-930 is also required for ubiquitination by the KPC complex and limited processing to generate NF-kappa-B p50 (Nuclear factor NF-kappa-B p50 subunit). In terms of processing, polyubiquitinated at multiple Lys residues in the C-terminus. Polyubiquitinated by the SCF(FBXW11) and SCF(BTRC) complexes following phosphorylation at Ser-926, Ser-930 and Ser-935, leading to its complete degradation. In contrast, polyubiquitination by the KPC complex following phosphorylation at Ser-930 leads to limited proteosomal processing and generation of the active NF-kappa-B p50 (Nuclear factor NF-kappa-B p50 subunit). Post-translationally, S-nitrosylation of Cys-59 affects DNA binding. The covalent modification of cysteine by 15-deoxy-Delta12,14-prostaglandin-J2 is autocatalytic and reversible. It may occur as an alternative to other cysteine modifications, such as S-nitrosylation and S-palmitoylation.

Its subcellular location is the cytoplasm. It is found in the nucleus. Functionally, NF-kappa-B is a pleiotropic transcription factor present in almost all cell types and is the endpoint of a series of signal transduction events that are initiated by a vast array of stimuli related to many biological processes such as inflammation, immunity, differentiation, cell growth, tumorigenesis and apoptosis. NF-kappa-B is a homo- or heterodimeric complex formed by the Rel-like domain-containing proteins RELA/p65, RELB, NFKB1/p105, NFKB1/p50, REL and NFKB2/p52 and the heterodimeric p65-p50 complex appears to be most abundant one. The dimers bind at kappa-B sites in the DNA of their target genes and the individual dimers have distinct preferences for different kappa-B sites that they can bind with distinguishable affinity and specificity. Different dimer combinations act as transcriptional activators or repressors, respectively. NF-kappa-B is controlled by various mechanisms of post-translational modification and subcellular compartmentalization as well as by interactions with other cofactors or corepressors. NF-kappa-B complexes are held in the cytoplasm in an inactive state complexed with members of the NF-kappa-B inhibitor (I-kappa-B) family. In a conventional activation pathway, I-kappa-B is phosphorylated by I-kappa-B kinases (IKKs) in response to different activators, subsequently degraded thus liberating the active NF-kappa-B complex which translocates to the nucleus. NF-kappa-B heterodimeric p65-p50 and RelB-p50 complexes are transcriptional activators. The NF-kappa-B p50-p50 homodimer is a transcriptional repressor, but can act as a transcriptional activator when associated with BCL3. NFKB1 appears to have dual functions such as cytoplasmic retention of attached NF-kappa-B proteins by p105 and generation of p50 by a cotranslational processing. The proteasome-mediated process ensures the production of both p50 and p105 and preserves their independent function, although processing of NFKB1/p105 also appears to occur post-translationally. p50 binds to the kappa-B consensus sequence 5'-GGRNNYYCC-3', located in the enhancer region of genes involved in immune response and acute phase reactions. Plays a role in the regulation of apoptosis. In a complex with MAP3K8, NFKB1/p105 represses MAP3K8-induced MAPK signaling; active MAP3K8 is released by proteasome-dependent degradation of NFKB1/p105. Its function is as follows. P105 is the precursor of the active p50 subunit (Nuclear factor NF-kappa-B p50 subunit) of the nuclear factor NF-kappa-B. Acts as a cytoplasmic retention of attached NF-kappa-B proteins by p105. Constitutes the active form, which associates with RELA/p65 to form the NF-kappa-B p65-p50 complex to form a transcription factor. Together with RELA/p65, binds to the kappa-B consensus sequence 5'-GGRNNYYCC-3', located in the enhancer region of genes involved in immune response and acute phase reactions. In terms of biological role, isoform 3 (p98) (but not p84 or p105) acts as a transactivator of NF-kappa-B-regulated gene expression. Functionally, acts as an inhibitor of transactivation of p50 NF-kappa-B subunit, probably by sequestering it in the cytoplasm. The sequence is that of Nuclear factor NF-kappa-B p105 subunit (Nfkb1) from Mus musculus (Mouse).